The following is a 403-amino-acid chain: Probable tRNA sulfurtransferase (403 aa).

Positions 60 to 165 (QLAEERLKPI…KEGVFLSCRT (106 aa)) constitute a THUMP domain. ATP-binding positions include 183–184 (ML), 208–209 (HF), R265, G287, and Q296.

The protein belongs to the ThiI family.

Its subcellular location is the cytoplasm. It catalyses the reaction [ThiI sulfur-carrier protein]-S-sulfanyl-L-cysteine + a uridine in tRNA + 2 reduced [2Fe-2S]-[ferredoxin] + ATP + H(+) = [ThiI sulfur-carrier protein]-L-cysteine + a 4-thiouridine in tRNA + 2 oxidized [2Fe-2S]-[ferredoxin] + AMP + diphosphate. The catalysed reaction is [ThiS sulfur-carrier protein]-C-terminal Gly-Gly-AMP + S-sulfanyl-L-cysteinyl-[cysteine desulfurase] + AH2 = [ThiS sulfur-carrier protein]-C-terminal-Gly-aminoethanethioate + L-cysteinyl-[cysteine desulfurase] + A + AMP + 2 H(+). The protein operates within cofactor biosynthesis; thiamine diphosphate biosynthesis. Catalyzes the ATP-dependent transfer of a sulfur to tRNA to produce 4-thiouridine in position 8 of tRNAs, which functions as a near-UV photosensor. Also catalyzes the transfer of sulfur to the sulfur carrier protein ThiS, forming ThiS-thiocarboxylate. This is a step in the synthesis of thiazole, in the thiamine biosynthesis pathway. The sulfur is donated as persulfide by IscS. The sequence is that of Probable tRNA sulfurtransferase from Listeria innocua serovar 6a (strain ATCC BAA-680 / CLIP 11262).